The primary structure comprises 212 residues: uncharacterized protein (212 aa).

A run of 4 helical transmembrane segments spans residues 20-40 (FLIG…LIIC), 70-90 (LMLL…YWLG), 155-175 (FVLI…YLGE), and 192-212 (QIVI…MEKI).

Belongs to the DedA family.

Its subcellular location is the cell membrane. This is an uncharacterized protein from Haemophilus influenzae (strain ATCC 51907 / DSM 11121 / KW20 / Rd).